Reading from the N-terminus, the 271-residue chain is Probable CAAX prenyl protease 2 (271 aa).

2 consecutive transmembrane segments (helical) span residues V3–V23 and C42–P62. Residues E126 and H160 each act as proton donor/acceptor in the active site. 2 consecutive transmembrane segments (helical) span residues A174–W194 and I236–D256.

The protein belongs to the peptidase U48 family.

It is found in the endoplasmic reticulum membrane. It carries out the reaction Hydrolyzes the peptide bond -P2-(S-farnesyl or geranylgeranyl)C-P1'-P2'-P3'-COOH where P1' and P2' are amino acids with aliphatic sidechains and P3' is any C-terminal residue.. Protease involved in the processing of a variety of prenylated proteins containing the C-terminal CAAX motif, where C is a cysteine modified with an isoprenoid lipid, A is an aliphatic amino acid and X is any C-terminal amino acid. Proteolytically removes the C-terminal three residues of farnesylated proteins, leaving the prenylated cysteine as the new C-terminus. This is Probable CAAX prenyl protease 2 from Schizosaccharomyces pombe (strain 972 / ATCC 24843) (Fission yeast).